A 412-amino-acid chain; its full sequence is Maltoporin (412 aa).

The N-terminal stretch at 1–22 (MKKVSVIAAAVAATLAAGSAFA) is a signal peptide.

The protein belongs to the porin LamB (TC 1.B.3) family. As to quaternary structure, homotrimer formed of three 18-stranded antiparallel beta-barrels, containing three independent channels.

It is found in the cell outer membrane. It catalyses the reaction beta-maltose(in) = beta-maltose(out). In terms of biological role, involved in the transport of maltose and maltodextrins. The polypeptide is Maltoporin (Vibrio cholerae serotype O1 (strain ATCC 39315 / El Tor Inaba N16961)).